Reading from the N-terminus, the 192-residue chain is Peptidyl-tRNA hydrolase (192 aa).

Tyr18 contacts tRNA. His23 serves as the catalytic Proton acceptor. Residues Phe69, Asn71, and Asn117 each coordinate tRNA.

It belongs to the PTH family. As to quaternary structure, monomer.

The protein localises to the cytoplasm. The catalysed reaction is an N-acyl-L-alpha-aminoacyl-tRNA + H2O = an N-acyl-L-amino acid + a tRNA + H(+). Hydrolyzes ribosome-free peptidyl-tRNAs (with 1 or more amino acids incorporated), which drop off the ribosome during protein synthesis, or as a result of ribosome stalling. In terms of biological role, catalyzes the release of premature peptidyl moieties from peptidyl-tRNA molecules trapped in stalled 50S ribosomal subunits, and thus maintains levels of free tRNAs and 50S ribosomes. This Neisseria gonorrhoeae (strain ATCC 700825 / FA 1090) protein is Peptidyl-tRNA hydrolase.